We begin with the raw amino-acid sequence, 395 residues long: Succinyl-diaminopimelate desuccinylase 2 (395 aa).

Residue His79 coordinates Zn(2+). The active site involves Asp81. Position 112 (Asp112) interacts with Zn(2+). Glu145 serves as the catalytic Proton acceptor. Glu146, Glu174, and His363 together coordinate Zn(2+).

It belongs to the peptidase M20A family. DapE subfamily. As to quaternary structure, homodimer. Requires Zn(2+) as cofactor. It depends on Co(2+) as a cofactor.

It catalyses the reaction N-succinyl-(2S,6S)-2,6-diaminopimelate + H2O = (2S,6S)-2,6-diaminopimelate + succinate. The protein operates within amino-acid biosynthesis; L-lysine biosynthesis via DAP pathway; LL-2,6-diaminopimelate from (S)-tetrahydrodipicolinate (succinylase route): step 3/3. Functionally, catalyzes the hydrolysis of N-succinyl-L,L-diaminopimelic acid (SDAP), forming succinate and LL-2,6-diaminopimelate (DAP), an intermediate involved in the bacterial biosynthesis of lysine and meso-diaminopimelic acid, an essential component of bacterial cell walls. This Ruegeria sp. (strain TM1040) (Silicibacter sp.) protein is Succinyl-diaminopimelate desuccinylase 2.